A 294-amino-acid chain; its full sequence is 4-diphosphocytidyl-2-C-methyl-D-erythritol kinase (294 aa).

Lysine 16 is an active-site residue. ATP is bound at residue 99–109 (PMGAGLGGGSS). Residue aspartate 141 is part of the active site.

Belongs to the GHMP kinase family. IspE subfamily.

It catalyses the reaction 4-CDP-2-C-methyl-D-erythritol + ATP = 4-CDP-2-C-methyl-D-erythritol 2-phosphate + ADP + H(+). Its pathway is isoprenoid biosynthesis; isopentenyl diphosphate biosynthesis via DXP pathway; isopentenyl diphosphate from 1-deoxy-D-xylulose 5-phosphate: step 3/6. In terms of biological role, catalyzes the phosphorylation of the position 2 hydroxy group of 4-diphosphocytidyl-2C-methyl-D-erythritol. In Polynucleobacter asymbioticus (strain DSM 18221 / CIP 109841 / QLW-P1DMWA-1) (Polynucleobacter necessarius subsp. asymbioticus), this protein is 4-diphosphocytidyl-2-C-methyl-D-erythritol kinase.